We begin with the raw amino-acid sequence, 255 residues long: DNA repair protein RecO (255 aa).

It belongs to the RecO family.

In terms of biological role, involved in DNA repair and RecF pathway recombination. The sequence is that of DNA repair protein RecO from Bacillus velezensis (strain DSM 23117 / BGSC 10A6 / LMG 26770 / FZB42) (Bacillus amyloliquefaciens subsp. plantarum).